A 148-amino-acid polypeptide reads, in one-letter code: MARIPTAALGCISLLCLQLPGSLSRSLGGDPRPVKPREPPARSPSSSLQPRHPAPRPVVWKLHRALQAQRGAGLAPVMGQPLRDGGRQHSGPRRHSGPRRTQAQLLRVGCVLGTCQVQNLSHRLWQLMGPAGRQDSAPVDPSSPHSYG.

The first 24 residues, 1–24 (MARIPTAALGCISLLCLQLPGSLS), serve as a signal peptide directing secretion. Positions 25 to 98 (RSLGGDPRPV…HSGPRRHSGP (74 aa)) are excised as a propeptide. Disordered regions lie at residues 26 to 57 (SLGG…APRP) and 70 to 101 (RGAG…PRRT). A disulfide bridge links C110 with C115. Y147 bears the Tyrosine amide mark.

This sequence belongs to the adrenomedullin family. As to expression, expressed in the esophagus, stomach, jejunum, ileum, ileocecum, ascending colon, transverse colon, descending colon and rectum. Expressed in myocardial cells of the heart, renal tubular cells, hypothalamus, and pituitary.

It is found in the secreted. Functionally, intermedin/ADM2 is a peptide hormone that plays a role as physiological regulator of gastrointestinal and cardiovascular bioactivities mediated by the CALCRL-RAMPs receptor complexes. Activates the cAMP-dependent pathway through interaction with CALCRL-RAMP3 receptor complex. The chain is Protein ADM2 from Homo sapiens (Human).